Here is a 185-residue protein sequence, read N- to C-terminus: MVEVGDLKKGMVIMVNGEPHRVVDVSKHHMAMGRGIIRTKLKSVVTGFVKDVNFSSGERVEEANLSFRQAQFLYSDGAHYHFMALDDYEQYILSEEDLQDAKWYLIENLELSLVFLEDKPIGVQLPNVVTLKVVETEPSFKGDTVSGGGKPAVLETGLKINVPFFVETGEFIKVDTRTGEYVERA.

It belongs to the elongation factor P family.

It localises to the cytoplasm. The protein operates within protein biosynthesis; polypeptide chain elongation. Involved in peptide bond synthesis. Stimulates efficient translation and peptide-bond synthesis on native or reconstituted 70S ribosomes in vitro. Probably functions indirectly by altering the affinity of the ribosome for aminoacyl-tRNA, thus increasing their reactivity as acceptors for peptidyl transferase. This chain is Elongation factor P, found in Pseudothermotoga lettingae (strain ATCC BAA-301 / DSM 14385 / NBRC 107922 / TMO) (Thermotoga lettingae).